The chain runs to 393 residues: Autophagy-related protein 18c (393 aa).

WD repeat units follow at residues 27-65 (KEEA…ETFR), 70-114 (DGGF…CISE), 199-239 (AHDS…RLQE), and 244-283 (VDRA…VGED).

This sequence belongs to the WD repeat PROPPIN family. In terms of assembly, component of the PI(3,5)P2 regulatory complex at least composed of ATG18, SAC/FIG4, FAB1 and VAC14. As to expression, expressed in roots, stems, flowers and leaves.

Its subcellular location is the preautophagosomal structure membrane. The protein localises to the vacuole membrane. Its function is as follows. The PI(3,5)P2 regulatory complex regulates both the synthesis and turnover of phosphatidylinositol 3,5-bisphosphate (PtdIns(3,5)P2). Required for autophagy. This is Autophagy-related protein 18c (ATG18C) from Arabidopsis thaliana (Mouse-ear cress).